The chain runs to 334 residues: Formamidase (334 aa).

One can recognise a CN hydrolase domain in the interval 14-260 (FLVAAIQFPV…WEIVTGEIYP (247 aa)). The Proton acceptor role is filled by Glu60. Lys133 (proton donor) is an active-site residue. The active-site Nucleophile is the Cys166.

Belongs to the carbon-nitrogen hydrolase superfamily. Aliphatic amidase family.

The catalysed reaction is formamide + H2O = formate + NH4(+). Its function is as follows. Is an aliphatic amidase with a restricted substrate specificity, as it only hydrolyzes formamide. This is Formamidase from Helicobacter pylori (strain J99 / ATCC 700824) (Campylobacter pylori J99).